Consider the following 201-residue polypeptide: Pyridoxal 5'-phosphate synthase subunit PdxT (201 aa).

Position 48 to 50 (Gly-48 to Ser-50) interacts with L-glutamine. The active-site Nucleophile is the Cys-80. L-glutamine is bound by residues Arg-109 and Ile-137 to Arg-138. Residues His-180 and Glu-182 each act as charge relay system in the active site.

The protein belongs to the glutaminase PdxT/SNO family. In the presence of PdxS, forms a dodecamer of heterodimers. Only shows activity in the heterodimer.

The enzyme catalyses aldehydo-D-ribose 5-phosphate + D-glyceraldehyde 3-phosphate + L-glutamine = pyridoxal 5'-phosphate + L-glutamate + phosphate + 3 H2O + H(+). It catalyses the reaction L-glutamine + H2O = L-glutamate + NH4(+). It participates in cofactor biosynthesis; pyridoxal 5'-phosphate biosynthesis. Catalyzes the hydrolysis of glutamine to glutamate and ammonia as part of the biosynthesis of pyridoxal 5'-phosphate. The resulting ammonia molecule is channeled to the active site of PdxS. The polypeptide is Pyridoxal 5'-phosphate synthase subunit PdxT (Cutibacterium acnes (strain DSM 16379 / KPA171202) (Propionibacterium acnes)).